The primary structure comprises 601 residues: MRLSQSLFVTLREDPADAEIPSHKLLLRAGYIRRIGRGIYAYLPLMWRVLQKVSQIVREEMNATGAQETLLPQLQPAEIWQESGRWDTYTQAEGIMFSLRDRLDGELGLGPTHEEVITTIAKDMIRSYRQLPQHLYQIQTKFRDEIRPRFGLMRGREFIMKDGYSFHASEECLKKTYADMDQAYRNMLRRCGLQFRAVEADSGAIGGSGSQEFMILADAGEDEILYTEDEKYAANTEKAVSLPVEAIASPFNSFEKRETPNTATIESLCKFLNCSPTCVVKNVLYQVVYNNGKTVLALISIRGDQDVNEVKLQNELTKLAPNYDAKTVISLTVPDADAQQKWAAKSLPLGYISPALADDCIAKNKAVSGEFLRLVDPTAATLENFVTGADETNYHVLGANWGTEFKLPPLQVDVRLAKAGDRAVHDPTQILQTARGIEAGHIFQLGTKYSEAMGATFTDENGKEHPLVMGCYGVGVSRLAQAAVEQSYDENGIIWPVAIAPYHAVVVVPNVKSEEQMAAAEKLYADLNAAGVETILDDRNERAGVKFKDAELIGIPFRVVTGKSLKDGKVEVVRRKEGDRQDLDLDAVVATLKNWVEAAGQ.

The protein belongs to the class-II aminoacyl-tRNA synthetase family. ProS type 1 subfamily. In terms of assembly, homodimer.

The protein resides in the cytoplasm. It carries out the reaction tRNA(Pro) + L-proline + ATP = L-prolyl-tRNA(Pro) + AMP + diphosphate. Functionally, catalyzes the attachment of proline to tRNA(Pro) in a two-step reaction: proline is first activated by ATP to form Pro-AMP and then transferred to the acceptor end of tRNA(Pro). As ProRS can inadvertently accommodate and process non-cognate amino acids such as alanine and cysteine, to avoid such errors it has two additional distinct editing activities against alanine. One activity is designated as 'pretransfer' editing and involves the tRNA(Pro)-independent hydrolysis of activated Ala-AMP. The other activity is designated 'posttransfer' editing and involves deacylation of mischarged Ala-tRNA(Pro). The misacylated Cys-tRNA(Pro) is not edited by ProRS. The sequence is that of Proline--tRNA ligase from Picosynechococcus sp. (strain ATCC 27264 / PCC 7002 / PR-6) (Agmenellum quadruplicatum).